The sequence spans 583 residues: CBP80/20-dependent translation initiation factor (583 aa).

Disordered regions lie at residues 42-95, 129-154, 190-251, and 294-325; these read TDKT…PLDM, RQRN…RVEG, RKRN…GYSQ, and SNTD…RPKI. Positions 43 to 53 are enriched in basic and acidic residues; it reads DKTEGDGESDK. The segment covering 54–63 has biased composition (polar residues); sequence TQSNVSQWTV. Basic and acidic residues-rich tracts occupy residues 65-80 and 141-154; these read CTER…RNRE and IDRD…RVEG. Residues 190 to 199 show a composition bias toward basic residues; it reads RKRNDRRKQQ. Positions 200–213 are enriched in low complexity; that stretch reads KPQGGNKQPPSQQN. Residues 298–324 show a composition bias toward basic and acidic residues; the sequence is STERHCPPANDSEAKRKESIQSRDRPK. Residues 361–562 enclose the MIF4G domain; it reads IEILNSMRNN…LEVIELHANS (202 aa).

Belongs to the CTIF family.

The protein resides in the cytoplasm. It localises to the perinuclear region. In terms of biological role, specifically required for the pioneer round of mRNA translation mediated by the cap-binding complex (CBC), that takes place during or right after mRNA export via the nuclear pore complex (NPC). In contrast, it is not involved in steady state translation, that takes place when the CBC complex is replaced by cytoplasmic cap-binding protein eIF4E. Also required for nonsense-mediated mRNA decay (NMD), the pioneer round of mRNA translation mediated by the cap-binding complex playing a central role in nonsense-mediated mRNA decay (NMD). The sequence is that of CBP80/20-dependent translation initiation factor (ctif) from Xenopus tropicalis (Western clawed frog).